The sequence spans 280 residues: Transcription factor MYB60 (280 aa).

2 HTH myb-type domains span residues 9 to 65 (KIGI…RPGI) and 66 to 116 (KRGN…KKKL). DNA-binding regions (H-T-H motif) lie at residues 37 to 61 (WRSVPTNTGLLRCSKSCRLRWTNYL) and 89 to 112 (WASIASYLPQRTDNDIKNYWNTHL). An S-nitrosocysteine mark is found at cysteine 49 and cysteine 53. Residues 118-127 (KSDSDERSRS) show a composition bias toward basic and acidic residues. Disordered stretches follow at residues 118–149 (KSDSDERSRSENIALQTSSTRNTINHRSTYAS) and 204–247 (EEGH…NATP). A compositionally biased stretch (polar residues) spans 128-149 (ENIALQTSSTRNTINHRSTYAS).

In terms of tissue distribution, specifically expressed in guard cells. Present in seedlings, leaves, stems and flowers.

The protein localises to the nucleus. Functionally, transcription factor involved in the regulation of gene (e.g. drought-regulated and flavonoid biosynthetic genes) expression and stomatal movements leading to negative regulation of responses to drought and responses to other physiological stimuli (e.g. light). Promotes guard cell deflation in response to water deficit. Triggers root growth upon osmotic stress (e.g. mannitol containing medium). This is Transcription factor MYB60 from Arabidopsis thaliana (Mouse-ear cress).